Here is a 453-residue protein sequence, read N- to C-terminus: Allantoinase (453 aa).

Zn(2+) is bound by residues histidine 59, histidine 61, lysine 146, histidine 186, histidine 242, and aspartate 315. At lysine 146 the chain carries N6-carboxylysine.

This sequence belongs to the metallo-dependent hydrolases superfamily. Allantoinase family. In terms of assembly, homotetramer. Requires Zn(2+) as cofactor. Carboxylation allows a single lysine to coordinate two zinc ions.

The catalysed reaction is (S)-allantoin + H2O = allantoate + H(+). Its pathway is nitrogen metabolism; (S)-allantoin degradation; allantoate from (S)-allantoin: step 1/1. Functionally, catalyzes the conversion of allantoin (5-ureidohydantoin) to allantoic acid by hydrolytic cleavage of the five-member hydantoin ring. The protein is Allantoinase of Salmonella paratyphi B (strain ATCC BAA-1250 / SPB7).